Here is a 426-residue protein sequence, read N- to C-terminus: Serine--tRNA ligase (426 aa).

Residues 1–15 (MIDVKDLSENPDKFR) show a composition bias toward basic and acidic residues. The interval 1-20 (MIDVKDLSENPDKFRASQRA) is disordered. Residue 228-230 (TSE) participates in L-serine binding. Residues 259–261 (RRE) and Val275 contribute to the ATP site. Residue Glu282 coordinates L-serine. An ATP-binding site is contributed by 346–349 (ELTS). Thr386 provides a ligand contact to L-serine.

The protein belongs to the class-II aminoacyl-tRNA synthetase family. Type-1 seryl-tRNA synthetase subfamily. Homodimer. The tRNA molecule binds across the dimer.

The protein localises to the cytoplasm. The enzyme catalyses tRNA(Ser) + L-serine + ATP = L-seryl-tRNA(Ser) + AMP + diphosphate + H(+). The catalysed reaction is tRNA(Sec) + L-serine + ATP = L-seryl-tRNA(Sec) + AMP + diphosphate + H(+). The protein operates within aminoacyl-tRNA biosynthesis; selenocysteinyl-tRNA(Sec) biosynthesis; L-seryl-tRNA(Sec) from L-serine and tRNA(Sec): step 1/1. Functionally, catalyzes the attachment of serine to tRNA(Ser). Is also able to aminoacylate tRNA(Sec) with serine, to form the misacylated tRNA L-seryl-tRNA(Sec), which will be further converted into selenocysteinyl-tRNA(Sec). The chain is Serine--tRNA ligase from Paenarthrobacter aurescens (strain TC1).